A 292-amino-acid polypeptide reads, in one-letter code: Large ribosomal subunit protein bL19m (292 aa).

Residues Pro-40–Val-61 are disordered. Ser-77 carries the post-translational modification Phosphoserine.

Belongs to the bacterial ribosomal protein bL19 family. In terms of assembly, component of the mitochondrial ribosome large subunit (39S) which comprises a 16S rRNA and about 50 distinct proteins.

Its subcellular location is the mitochondrion. This is Large ribosomal subunit protein bL19m (MRPL19) from Pongo abelii (Sumatran orangutan).